Consider the following 275-residue polypeptide: Uroplakin-3b (275 aa).

A signal peptide spans Met1 to Ser26. The Lumenal portion of the chain corresponds to Leu27–Cys196. A glycan (N-linked (GlcNAc...) asparagine) is linked at Asn77. A helical membrane pass occupies residues Met197–Ala217. Topologically, residues Ala218–Pro275 are cytoplasmic.

This sequence belongs to the uroplakin-3 family. As to quaternary structure, heterodimer with uroplakin-1B (UPK1B). As to expression, expression is urothelium-specific.

The protein localises to the cell membrane. Component of the asymmetric unit membrane (AUM); a highly specialized biomembrane elaborated by terminally differentiated urothelial cells. May play an important role in AUM-cytoskeleton interaction in terminally differentiated urothelial cells. It also contributes to the formation of urothelial glycocalyx which may play an important role in preventing bacterial adherence. The protein is Uroplakin-3b (Upk3b) of Mus musculus (Mouse).